The primary structure comprises 292 residues: 4-diphosphocytidyl-2-C-methyl-D-erythritol kinase (292 aa).

Lys11 is a catalytic residue. Pro95–Ser105 provides a ligand contact to ATP. Asp137 is a catalytic residue.

Belongs to the GHMP kinase family. IspE subfamily.

It carries out the reaction 4-CDP-2-C-methyl-D-erythritol + ATP = 4-CDP-2-C-methyl-D-erythritol 2-phosphate + ADP + H(+). It participates in isoprenoid biosynthesis; isopentenyl diphosphate biosynthesis via DXP pathway; isopentenyl diphosphate from 1-deoxy-D-xylulose 5-phosphate: step 3/6. In terms of biological role, catalyzes the phosphorylation of the position 2 hydroxy group of 4-diphosphocytidyl-2C-methyl-D-erythritol. The protein is 4-diphosphocytidyl-2-C-methyl-D-erythritol kinase of Alkaliphilus oremlandii (strain OhILAs) (Clostridium oremlandii (strain OhILAs)).